Consider the following 330-residue polypeptide: Tetraacyldisaccharide 4'-kinase (330 aa).

ATP is bound at residue 58–65 (TVGGSGKT).

The protein belongs to the LpxK family.

It catalyses the reaction a lipid A disaccharide + ATP = a lipid IVA + ADP + H(+). It participates in glycolipid biosynthesis; lipid IV(A) biosynthesis; lipid IV(A) from (3R)-3-hydroxytetradecanoyl-[acyl-carrier-protein] and UDP-N-acetyl-alpha-D-glucosamine: step 6/6. Functionally, transfers the gamma-phosphate of ATP to the 4'-position of a tetraacyldisaccharide 1-phosphate intermediate (termed DS-1-P) to form tetraacyldisaccharide 1,4'-bis-phosphate (lipid IVA). The protein is Tetraacyldisaccharide 4'-kinase of Shewanella halifaxensis (strain HAW-EB4).